A 275-amino-acid polypeptide reads, in one-letter code: MAIKTYKPTTPSRRYMTNLDSGDITAKASVRALLKNLPRSAGRNSNGRITSRHREAGAKKLYRIIDFKRNKFGIEGTVATIEYDPYRNCRICLVNYVDGDRRYILQPKGLNVGDKIMSAESGLDIKTGNTMKLKNIPVGTLVHNIELSPGHGGQIARSAGGYAQIMGRDGKYVSLRLPSGEMRYVLGECLATIGTVGNEDFSNIVIGKAGRSRHLGIRPQTRGSAMNPIDHPHGGGEGKTNSGRHPVSPWGMPTKGYKTRKKKASDKLIISKRKK.

The tract at residues 218 to 275 (RPQTRGSAMNPIDHPHGGGEGKTNSGRHPVSPWGMPTKGYKTRKKKASDKLIISKRKK) is disordered. Over residues 257–275 (YKTRKKKASDKLIISKRKK) the composition is skewed to basic residues.

Belongs to the universal ribosomal protein uL2 family. Part of the 50S ribosomal subunit. Forms a bridge to the 30S subunit in the 70S ribosome.

One of the primary rRNA binding proteins. Required for association of the 30S and 50S subunits to form the 70S ribosome, for tRNA binding and peptide bond formation. It has been suggested to have peptidyltransferase activity; this is somewhat controversial. Makes several contacts with the 16S rRNA in the 70S ribosome. The protein is Large ribosomal subunit protein uL2 of Sulfurovum sp. (strain NBC37-1).